The sequence spans 71 residues: Protein SlyX homolog (71 aa).

It belongs to the SlyX family.

This is Protein SlyX homolog from Stutzerimonas stutzeri (strain A1501) (Pseudomonas stutzeri).